Reading from the N-terminus, the 1286-residue chain is 5-oxoprolinase (1286 aa).

Phosphoserine occurs at positions 930 and 1077.

Belongs to the oxoprolinase family. As to quaternary structure, homodimer.

Its subcellular location is the cytoplasm. It carries out the reaction 5-oxo-L-proline + ATP + 2 H2O = L-glutamate + ADP + phosphate + H(+). In terms of biological role, catalyzes the cleavage of 5-oxo-L-proline to form L-glutamate coupled to the hydrolysis of ATP to ADP and inorganic phosphate. In Saccharomyces cerevisiae (strain ATCC 204508 / S288c) (Baker's yeast), this protein is 5-oxoprolinase (OXP1).